Reading from the N-terminus, the 1054-residue chain is Cell wall acid trehalase ARB_03719 (1054 aa).

An N-terminal signal peptide occupies residues 1 to 24; that stretch reads MKQPNINLAACILWLLSIITAVAA. N-linked (GlcNAc...) asparagine glycosylation is found at N138, N178, N183, N207, N239, N277, and N309. 450–451 contributes to the substrate binding site; the sequence is WD. N-linked (GlcNAc...) asparagine glycosylation is found at N495, N515, N572, and N580. The active-site Proton donor is the E586. Residues N620 and N648 are each glycosylated (N-linked (GlcNAc...) asparagine). 654–655 provides a ligand contact to substrate; sequence KQ. Residues N808 and N844 are each glycosylated (N-linked (GlcNAc...) asparagine). The disordered stretch occupies residues 950 to 974; that stretch reads PLHPVTDPENGDASGSSPTTPASSV. Low complexity predominate over residues 962 to 974; sequence ASGSSPTTPASSV. N1004, N1007, and N1039 each carry an N-linked (GlcNAc...) asparagine glycan.

This sequence belongs to the glycosyl hydrolase 65 family.

It localises to the secreted. It is found in the cell wall. The catalysed reaction is alpha,alpha-trehalose + H2O = alpha-D-glucose + beta-D-glucose. Its function is as follows. Cell wall acid trehalase that catalyzes hydrolysis of the disaccharide trehalose and required for growth on trehalose as carbon source. Plays a role in virulence. The polypeptide is Cell wall acid trehalase ARB_03719 (Arthroderma benhamiae (strain ATCC MYA-4681 / CBS 112371) (Trichophyton mentagrophytes)).